A 46-amino-acid polypeptide reads, in one-letter code: Toxin PhcrTx2 (46 aa).

3 cysteine pairs are disulfide-bonded: cysteine 4/cysteine 40, cysteine 6/cysteine 32, and cysteine 22/cysteine 41.

This sequence belongs to the sea anemone type 3 (BDS) potassium channel toxin family.

Its subcellular location is the secreted. The protein localises to the nematocyst. Functionally, neurotoxin that induces paralysis (but not death) to U.thayeri crabs. Partially and reversibly inhibits glutamate-evoked peak currents (IC(50)=4.7 uM) but not voltage-gated potassium channel currents in cultured isolated neurons from the land snail H.aspersa. Weakly inhibits voltage-gated potassium peak currents (IC(50)=6.4 uM) and steady-state currents (IC(50)=8.2 uM) in rat dorsal root ganglion (DRG) neurons. Weakly inhibits voltage-gated sodium currents in rat DRG neurons (IC(50)=0.9 uM). The protein is Toxin PhcrTx2 of Phymanthus crucifer (Red beaded anemone).